We begin with the raw amino-acid sequence, 285 residues long: Sulfur carrier protein TtuD (285 aa).

Rhodanese domains lie at 20 to 127 (EDPK…PLTT) and 161 to 281 (KEGK…VPIA). At C240 the chain carries Cysteine persulfide.

Cys-240 can accept a sulfur atom as persulfide forms from cysteine desulfurases IscS and SufS.

The protein operates within tRNA modification. In terms of biological role, required for the efficient 2-thiolation of 5-methyluridine residue at position 54 in the T loop of tRNAs, leading to 5-methyl-2-thiouridine (m(5)s(2)U or s(2)T). TtuD is a sulfur carrier protein that has a role to direct sulfur flow from cysteine desulfurases to m(5)s(2)U synthesis in vivo. It enhances the cysteine desulfurase activity of IscS and SufS, as well as the formation of thiocarboxylated TtuB (TtuB-COSH) in the presence of these desulfurases. In Thermus thermophilus (strain ATCC BAA-163 / DSM 7039 / HB27), this protein is Sulfur carrier protein TtuD.